Consider the following 525-residue polypeptide: Ent-kaurene oxidase (525 aa).

A helical membrane pass occupies residues 31-51; sequence VHWLIYVAFGAWLCSYVIHVL. Residue Cys466 participates in heme binding.

Belongs to the cytochrome P450 family. The cofactor is heme.

It is found in the membrane. It catalyses the reaction ent-kaur-16-ene + 3 reduced [NADPH--hemoprotein reductase] + 3 O2 = ent-kaur-16-en-19-oate + 3 oxidized [NADPH--hemoprotein reductase] + 4 H2O + 4 H(+). The protein operates within plant hormone biosynthesis; gibberellin biosynthesis. In terms of biological role, catalyzes three successive oxidations of the 4-methyl group of ent-kaurene giving kaurenoic acid, a key step in gibberellin (GA) biosynthesis. The chain is Ent-kaurene oxidase (CYP503A1) from Gibberella intermedia (Bulb rot disease fungus).